We begin with the raw amino-acid sequence, 309 residues long: Ribonuclease Z (309 aa).

7 residues coordinate Zn(2+): His63, His65, Asp67, His68, His145, Asp216, and His274. Asp67 functions as the Proton acceptor in the catalytic mechanism.

It belongs to the RNase Z family. In terms of assembly, homodimer. Requires Zn(2+) as cofactor.

The catalysed reaction is Endonucleolytic cleavage of RNA, removing extra 3' nucleotides from tRNA precursor, generating 3' termini of tRNAs. A 3'-hydroxy group is left at the tRNA terminus and a 5'-phosphoryl group is left at the trailer molecule.. Functionally, zinc phosphodiesterase, which displays some tRNA 3'-processing endonuclease activity. Probably involved in tRNA maturation, by removing a 3'-trailer from precursor tRNA. This chain is Ribonuclease Z, found in Streptococcus agalactiae serotype Ia (strain ATCC 27591 / A909 / CDC SS700).